An 83-amino-acid polypeptide reads, in one-letter code: uncharacterized protein (83 aa).

The signal sequence occupies residues 1–20; sequence MRRALTLAVLATCAVLPALA.

The protein to P.denitrificans and M.extorquens MoxJ.

This is an uncharacterized protein from Paracoccus denitrificans.